The primary structure comprises 423 residues: D-tagatose-1,6-bisphosphate aldolase subunit GatZ (423 aa).

Belongs to the GatZ/KbaZ family. GatZ subfamily. As to quaternary structure, forms a complex with GatY.

It functions in the pathway carbohydrate metabolism; D-tagatose 6-phosphate degradation; D-glyceraldehyde 3-phosphate and glycerone phosphate from D-tagatose 6-phosphate: step 2/2. Component of the tagatose-1,6-bisphosphate aldolase GatYZ that is required for full activity and stability of the Y subunit. Could have a chaperone-like function for the proper and stable folding of GatY. When expressed alone, GatZ does not show any aldolase activity. Is involved in the catabolism of galactitol. The sequence is that of D-tagatose-1,6-bisphosphate aldolase subunit GatZ from Salmonella gallinarum (strain 287/91 / NCTC 13346).